Here is a 142-residue protein sequence, read N- to C-terminus: Galactose-6-phosphate isomerase subunit LacA (142 aa).

This sequence belongs to the LacAB/RpiB family. As to quaternary structure, heteromultimeric protein consisting of LacA and LacB.

The catalysed reaction is aldehydo-D-galactose 6-phosphate = keto-D-tagatose 6-phosphate. It functions in the pathway carbohydrate metabolism; D-galactose 6-phosphate degradation; D-tagatose 6-phosphate from D-galactose 6-phosphate: step 1/1. This chain is Galactose-6-phosphate isomerase subunit LacA, found in Staphylococcus epidermidis (strain ATCC 35984 / DSM 28319 / BCRC 17069 / CCUG 31568 / BM 3577 / RP62A).